Here is a 414-residue protein sequence, read N- to C-terminus: MLMLRRTAGAIPKPPKSKVYGFLRRFSVHPRTLSCHKLVLGIETSCDDTGAAVVDETGNVLGEALHSQTQVHLKTGGIVPPVAQQLHRENIQRIVEETLSACRITPSDLSAIATTIKPGLALSLGVGLSFSLQLVNQFKKPFIPIHHMEAHALTIRLTNKVEFPFLVLLISGGHCLLALVQGVSDFLLLGKSLDIAPGDMLDKVARRLSLIKHPECSTMSGGKAIEQLAKDGNRFHFTINPPMQNAKNCDFSFTGLQHITDKLITHKEKEEGIEKGQILSSAADIAAAVQHATACHLAKRTHRAILFCKQKNLLSPANAVLVVSGGVASNLYIRKALEIVANATQCTLLCPPPRLCTDNGIMIAWNGIERLRAGLGVLHDVEDIRYEPKCPLGVDISREVAEAAIKVPRLKMAL.

A mitochondrion-targeting transit peptide spans 1 to 29 (MLMLRRTAGAIPKPPKSKVYGFLRRFSVH). 2 positions are modified to N6-acetyllysine: Lys-74 and Lys-140. His-147 and His-151 together coordinate a divalent metal cation. Residues 169-173 (LISGG) and Asp-202 contribute to the substrate site. An N6-acetyllysine modification is found at Lys-203. The substrate site is built by Gly-222 and Glu-226. Residues Lys-230 and Lys-299 each carry the N6-acetyllysine modification. Residues 329–330 (SN) and Thr-357 each bind substrate. Asp-358 contributes to the a divalent metal cation binding site.

It belongs to the KAE1 / TsaD family. In terms of assembly, monomer. It depends on a divalent metal cation as a cofactor.

It localises to the mitochondrion. The enzyme catalyses L-threonylcarbamoyladenylate + adenosine(37) in tRNA = N(6)-L-threonylcarbamoyladenosine(37) in tRNA + AMP + H(+). Functionally, required for the formation of a threonylcarbamoyl group on adenosine at position 37 (t(6)A37) in mitochondrial tRNAs that read codons beginning with adenine. Probably involved in the transfer of the threonylcarbamoyl moiety of threonylcarbamoyl-AMP (TC-AMP) to the N6 group of A37. Involved in mitochondrial genome maintenance. This Mus musculus (Mouse) protein is tRNA N6-adenosine threonylcarbamoyltransferase, mitochondrial.